The primary structure comprises 163 residues: Regulator of chromosome segregation (163 aa).

In terms of assembly, interacts with CpsD and ParB.

Its subcellular location is the cytoplasm. It localises to the nucleoid. It is found in the cell membrane. Functionally, required for cell division and chromosome segregation. Binds to DNA and is involved in segregating the origin of replication (oriC) region to new daughter cells. When the nucleoid is not properly segregated, involved in blocking the cell division to protect the nucleoid against premature truncation by the newly forming septum, a function which is dependent on CpsD and its autophosphorylation level. The chain is Regulator of chromosome segregation from Streptococcus pneumoniae serotype 2 (strain D39 / NCTC 7466).